We begin with the raw amino-acid sequence, 624 residues long: LEAF RUST 10 DISEASE-RESISTANCE LOCUS RECEPTOR-LIKE PROTEIN KINASE-like 2.2 (624 aa).

Residues 1–30 form the signal peptide; that stretch reads MDYLSSMGSQTARFCLILLFLFYYLPCALS. Residues 31 to 263 are Extracellular-facing; sequence QDDLWGCGTP…IPNTRSILIT (233 aa). Residues Asn45, Asn75, Asn85, Asn95, Asn150, and Asn164 are each glycosylated (N-linked (GlcNAc...) asparagine). A helical membrane pass occupies residues 264–284; the sequence is IGQVVGFHVFIIVVMIIAFLF. Residues 285–624 lie on the Cytoplasmic side of the membrane; the sequence is WRRKKVNDLR…EEDSSIYSEV (340 aa). One can recognise a Protein kinase domain in the interval 317–599; that stretch reads KSFTEVVGRG…SLDPPPKPLL (283 aa). ATP is bound by residues 323–331 and Lys345; that span reads VGRGGFGTV. The active-site Proton acceptor is Asp434. Residues 587-624 form a disordered region; the sequence is NLDSLDPPPKPLLHMPMQNNNAESSQPSEEDSSIYSEV. A compositionally biased stretch (polar residues) spans 603 to 624; it reads MQNNNAESSQPSEEDSSIYSEV.

It belongs to the protein kinase superfamily. Ser/Thr protein kinase family.

The protein localises to the membrane. It carries out the reaction L-seryl-[protein] + ATP = O-phospho-L-seryl-[protein] + ADP + H(+). The enzyme catalyses L-threonyl-[protein] + ATP = O-phospho-L-threonyl-[protein] + ADP + H(+). This chain is LEAF RUST 10 DISEASE-RESISTANCE LOCUS RECEPTOR-LIKE PROTEIN KINASE-like 2.2, found in Arabidopsis thaliana (Mouse-ear cress).